The sequence spans 492 residues: MIRPNMFALLMLVVLAITSVNADCPKVKRDVCVIGGGAAGMSIATLLKDRGYDPVVLERESVVGGHCNTQYFDPPEGETVDWIDYGVQLFMNTTQLNLTGVGSWSLATDKFAERFIGPNATLPLEGNDINLYVNMETGELVIPNVNETALNNALGVYFYLLSMYPWTSDGKYTGTIPPELLQSFGDFASPFGLNAMAEIFRAFGYNSGIAYGNYTNLPALYMLNAASMSVMQVLLGPSTTTFKVKGGCYSVYRGMSDYLGSENIVLNATVTELTRSFFLSTKSPRLRGYTTRADGSTDNFEYECEKVVVAHPPTLDDLSYVDLTQNEQDLFSNVEVAYYYAGVADISSSYLNGNSFQVMNADPSSEYNVPFGPGLISLGRYVDYGPTQIQAISNTNLEVCDMLEIITRDFENIPSWILNSFDIKTFDQHKEYAPHFNLASLSNPVSPYAKLAELQGSNNTYWVSALNRYTAATAHVWDEANIIVNTYFPSKN.

The N-terminal stretch at 1–22 is a signal peptide; the sequence is MIRPNMFALLMLVVLAITSVNA. N-linked (GlcNAc...) asparagine; by host glycans are attached at residues Asn-92, Asn-97, Asn-119, Asn-146, Asn-213, Asn-267, and Asn-458.

It is found in the secreted. This is an uncharacterized protein from Acanthamoeba polyphaga (Amoeba).